Reading from the N-terminus, the 111-residue chain is uncharacterized protein (111 aa).

The tract at residues 12–34 is disordered; the sequence is AWCPSRPPASAPSAPQEAARRGD. The tract at residues 71 to 76 is required for interaction with PPP3CA; that stretch reads PNIIIT. 2 positions are modified to phosphothreonine: T79 and T81.

Interacts (via PxIxIT motif, when phosphorylated on Thr-79) with PPP3CA.

This is an uncharacterized protein from Mus musculus (Mouse).